The chain runs to 20 residues: VLLDGNGEVVQNGGTYYLLP.

It belongs to the protease inhibitor I3 (leguminous Kunitz-type inhibitor) family.

In terms of biological role, inhibition of trypsin. This Erythrina corallodendron (Coral tree) protein is Trypsin inhibitor DE-3.